Here is a 343-residue protein sequence, read N- to C-terminus: 2,3,4,5-tetrahydropyridine-2,6-dicarboxylate N-succinyltransferase (343 aa).

Position 204 (Glu204) interacts with Mg(2+). The active-site Acyl-anhydride intermediate is the Glu220. Succinyl-CoA-binding positions include Arg222, Gly237, Ser240, Ala263, 278-279 (ES), Gly286, Lys303, and 316-319 (RRNS).

The protein belongs to the type 2 tetrahydrodipicolinate N-succinyltransferase family. Homotrimer.

It is found in the cytoplasm. It catalyses the reaction (S)-2,3,4,5-tetrahydrodipicolinate + succinyl-CoA + H2O = (S)-2-succinylamino-6-oxoheptanedioate + CoA. Its pathway is amino-acid biosynthesis; L-lysine biosynthesis via DAP pathway; LL-2,6-diaminopimelate from (S)-tetrahydrodipicolinate (succinylase route): step 1/3. Functionally, catalyzes the conversion of the cyclic tetrahydrodipicolinate (THDP) into the acyclic N-succinyl-L-2-amino-6-oxopimelate using succinyl-CoA. The sequence is that of 2,3,4,5-tetrahydropyridine-2,6-dicarboxylate N-succinyltransferase from Vibrio cholerae serotype O1 (strain ATCC 39315 / El Tor Inaba N16961).